A 183-amino-acid chain; its full sequence is Transmembrane and coiled-coil domain-containing protein 2 (183 aa).

A helical transmembrane segment spans residues V54–W74. Positions G127–I150 form a coiled coil.

It localises to the membrane. The protein is Transmembrane and coiled-coil domain-containing protein 2 (Tmco2) of Mus musculus (Mouse).